We begin with the raw amino-acid sequence, 154 residues long: Minor structural pilin EpdC (154 aa).

Residues 1 to 13 constitute a propeptide that is removed on maturation; the sequence is MIKMLQLPFNKKG. The short motif at 14-24 is the QXSXEXXXL element; that stretch reads QVSFDFIIAML.

In terms of processing, the N-terminus is cleaved by the prepilin peptidase EppA, which recognizes the class III signal sequence.

Its subcellular location is the secreted. The protein localises to the cell surface. It is found in the fimbrium. Its function is as follows. Minor component of the type IV-like pili. Essential for pili formation. The protein is Minor structural pilin EpdC of Methanococcus maripaludis (strain DSM 14266 / JCM 13030 / NBRC 101832 / S2 / LL).